Reading from the N-terminus, the 254-residue chain is CRISPR-associated endonuclease Cas1 (254 aa).

The Mn(2+) site is built by Glu78, His146, and Glu161.

This sequence belongs to the CRISPR-associated endonuclease Cas1 family. In terms of assembly, homodimer, forms a heterotetramer with a Cas2 homodimer. It depends on Mg(2+) as a cofactor. The cofactor is Mn(2+).

Functionally, CRISPR (clustered regularly interspaced short palindromic repeat), is an adaptive immune system that provides protection against mobile genetic elements (viruses, transposable elements and conjugative plasmids). CRISPR clusters contain spacers, sequences complementary to antecedent mobile elements, and target invading nucleic acids. CRISPR clusters are transcribed and processed into CRISPR RNA (crRNA). Acts as a dsDNA endonuclease. Involved in the integration of spacer DNA into the CRISPR cassette. The chain is CRISPR-associated endonuclease Cas1 from Leptospira interrogans serogroup Icterohaemorrhagiae serovar Lai (strain 56601).